Here is a 528-residue protein sequence, read N- to C-terminus: Apolipoprotein N-acyltransferase (528 aa).

Helical transmembrane passes span 8-28, 69-89, 99-119, 178-198, and 203-223; these read IMLLAGWRRALLAIASGAVGA, AFWIGWLFGFGYFVAGLWWLG, FAWALPLAVLGLPAVLAVFYG, VLGLFGVSALAVFVFAAPALL, and GAKLGLALAGILFCGHLGYGA. Residues 241–490 form the CN hydrolase domain; sequence VQPNIDQAAK…EGVENATFTL (250 aa). Glu-285 functions as the Proton acceptor in the catalytic mechanism. Residue Lys-349 is part of the active site. Cys-402 (nucleophile) is an active-site residue.

The protein belongs to the CN hydrolase family. Apolipoprotein N-acyltransferase subfamily.

It is found in the cell inner membrane. The enzyme catalyses N-terminal S-1,2-diacyl-sn-glyceryl-L-cysteinyl-[lipoprotein] + a glycerophospholipid = N-acyl-S-1,2-diacyl-sn-glyceryl-L-cysteinyl-[lipoprotein] + a 2-acyl-sn-glycero-3-phospholipid + H(+). Its pathway is protein modification; lipoprotein biosynthesis (N-acyl transfer). Its function is as follows. Catalyzes the phospholipid dependent N-acylation of the N-terminal cysteine of apolipoprotein, the last step in lipoprotein maturation. The sequence is that of Apolipoprotein N-acyltransferase from Allorhizobium ampelinum (strain ATCC BAA-846 / DSM 112012 / S4) (Agrobacterium vitis (strain S4)).